We begin with the raw amino-acid sequence, 198 residues long: MVGQPQPRDDVGSPRPRVIVGTIRPRVIVGTIRPRVIVGSARARPPPDGTPRPQLAAEESPRPRVIFGTPRARVILGSPRPRVIVSSPWPAVVVASPRPRTPVGSPWPRVVVGTPRPRVIVGSPRARVADADPASAPSQGALQGRRQDEHSGTRAEGSRPGGAAPVPEEGGRFARAQRLPPPRHLRLPGAPDRHRGQI.

Tandem repeats lie at residues 7 to 15 (PRDDVGSPR), 16 to 24 (PRVIVGTIR), 25 to 33 (PRVIVGTIR), 34 to 42 (PRVIVGSAR), 43 to 51 (ARPPPDGTP), 52 to 60 (RPQLAAEES), 61 to 69 (PRPRVIFGT), 70 to 78 (PRARVILGS), 79 to 87 (PRPRVIVSS), 88 to 96 (PWPAVVVAS), 97 to 105 (PRPRTPVGS), 106 to 114 (PWPRVVVGT), and 115 to 123 (PRPRVIVGS). The 13 x 9 AA approximate tandem-repeats of P-R-V-I-V-G-(S/T)-P-R stretch occupies residues 7–125 (PRDDVGSPRP…RPRVIVGSPR (119 aa)). Position 13 is a phosphoserine (Ser-13). A disordered region spans residues 37 to 64 (IVGSARARPPPDGTPRPQLAAEESPRPR). Thr-69 is modified (phosphothreonine). A phosphoserine mark is found at Ser-78, Ser-87, and Ser-96. The span at 94–121 (VASPRPRTPVGSPWPRVVVGTPRPRVIV) shows a compositional bias: low complexity. The disordered stretch occupies residues 94-198 (VASPRPRTPV…GAPDRHRGQI (105 aa)). Position 123 is a phosphoserine (Ser-123). Positions 145–157 (RRQDEHSGTRAEG) are enriched in basic and acidic residues. The segment covering 161 to 178 (GGAAPVPEEGGRFARAQR) has biased composition (low complexity).

As to quaternary structure, may interact with EIF5A and ERF1. In terms of processing, phosphorylated during M-phase.

It localises to the nucleus. The protein localises to the nucleolus. The protein is Ras-related protein Rab-34, isoform NARR (RAB34) of Homo sapiens (Human).